The sequence spans 91 residues: PqqA binding protein (91 aa).

The protein belongs to the PqqD family. As to quaternary structure, monomer. Interacts with PqqE.

The protein operates within cofactor biosynthesis; pyrroloquinoline quinone biosynthesis. In terms of biological role, functions as a PqqA binding protein and presents PqqA to PqqE, in the pyrroloquinoline quinone (PQQ) biosynthetic pathway. The protein is PqqA binding protein of Pseudomonas fluorescens (strain ATCC BAA-477 / NRRL B-23932 / Pf-5).